Consider the following 399-residue polypeptide: Tryptophan synthase beta chain (399 aa).

N6-(pyridoxal phosphate)lysine is present on Lys92.

Belongs to the TrpB family. As to quaternary structure, tetramer of two alpha and two beta chains. It depends on pyridoxal 5'-phosphate as a cofactor.

The enzyme catalyses (1S,2R)-1-C-(indol-3-yl)glycerol 3-phosphate + L-serine = D-glyceraldehyde 3-phosphate + L-tryptophan + H2O. It functions in the pathway amino-acid biosynthesis; L-tryptophan biosynthesis; L-tryptophan from chorismate: step 5/5. In terms of biological role, the beta subunit is responsible for the synthesis of L-tryptophan from indole and L-serine. The polypeptide is Tryptophan synthase beta chain (Nitrosomonas eutropha (strain DSM 101675 / C91 / Nm57)).